Consider the following 436-residue polypeptide: Glutamyl-tRNA reductase (436 aa).

Residues 49–52, Ser-109, 114–116, and Gln-120 each bind substrate; these read TCNR and EGQ. Cys-50 serves as the catalytic Nucleophile. 198–203 is an NADP(+) binding site; sequence GAGRMS.

Belongs to the glutamyl-tRNA reductase family. In terms of assembly, homodimer.

The enzyme catalyses (S)-4-amino-5-oxopentanoate + tRNA(Glu) + NADP(+) = L-glutamyl-tRNA(Glu) + NADPH + H(+). Its pathway is porphyrin-containing compound metabolism; protoporphyrin-IX biosynthesis; 5-aminolevulinate from L-glutamyl-tRNA(Glu): step 1/2. It functions in the pathway porphyrin-containing compound metabolism; chlorophyll biosynthesis. In terms of biological role, catalyzes the NADPH-dependent reduction of glutamyl-tRNA(Glu) to glutamate 1-semialdehyde (GSA). The chain is Glutamyl-tRNA reductase from Prochlorococcus marinus (strain AS9601).